Reading from the N-terminus, the 248-residue chain is UPF0173 metal-dependent hydrolase Hlac_1347 (248 aa).

It belongs to the UPF0173 family.

In Halorubrum lacusprofundi (strain ATCC 49239 / DSM 5036 / JCM 8891 / ACAM 34), this protein is UPF0173 metal-dependent hydrolase Hlac_1347.